A 337-amino-acid polypeptide reads, in one-letter code: MFDRIWFKSSFFYLFLLPFSWLYGVISTLNRISYQYGWRKVYRFSVPIIIIGNLTIGGNGKTPMVLWLVEHLKRRGWKVGVISRGYKGKSNNYPIIINMNSHSEECGDEPMLIWKRTGVSVAVSPKRADAVAALLRKQELDIIISDDGLQHYALFRDIEWVIVNSVLRFGNGCWLPAGPMRERINRLHTVQAIIANGSEVGIQSGEVLMQLFPIAVVNILTGERKPLYFLNNVVAIAGIGYPTQFFDTLRSYGIIPIRSISFSDHHVYSEKMLTSLTKKDEILLMTEKDAVKCIDFAHDNWWYVHTEVKINKIDTHNLLSMVENKIRYYKGSRYNVQ.

ATP is bound at residue 55–62 (TIGGNGKT).

The protein belongs to the LpxK family.

The enzyme catalyses a lipid A disaccharide + ATP = a lipid IVA + ADP + H(+). The protein operates within glycolipid biosynthesis; lipid IV(A) biosynthesis; lipid IV(A) from (3R)-3-hydroxytetradecanoyl-[acyl-carrier-protein] and UDP-N-acetyl-alpha-D-glucosamine: step 6/6. Transfers the gamma-phosphate of ATP to the 4'-position of a tetraacyldisaccharide 1-phosphate intermediate (termed DS-1-P) to form tetraacyldisaccharide 1,4'-bis-phosphate (lipid IVA). This chain is Tetraacyldisaccharide 4'-kinase, found in Blochmanniella pennsylvanica (strain BPEN).